Here is a 166-residue protein sequence, read N- to C-terminus: ATP synthase subunit b (166 aa).

A helical membrane pass occupies residues 10-30; that stretch reads LLFWMIVSFGIVFVILSKYGF.

This sequence belongs to the ATPase B chain family. As to quaternary structure, F-type ATPases have 2 components, F(1) - the catalytic core - and F(0) - the membrane proton channel. F(1) has five subunits: alpha(3), beta(3), gamma(1), delta(1), epsilon(1). F(0) has three main subunits: a(1), b(2) and c(10-14). The alpha and beta chains form an alternating ring which encloses part of the gamma chain. F(1) is attached to F(0) by a central stalk formed by the gamma and epsilon chains, while a peripheral stalk is formed by the delta and b chains.

It is found in the cell inner membrane. Its function is as follows. F(1)F(0) ATP synthase produces ATP from ADP in the presence of a proton or sodium gradient. F-type ATPases consist of two structural domains, F(1) containing the extramembraneous catalytic core and F(0) containing the membrane proton channel, linked together by a central stalk and a peripheral stalk. During catalysis, ATP synthesis in the catalytic domain of F(1) is coupled via a rotary mechanism of the central stalk subunits to proton translocation. Functionally, component of the F(0) channel, it forms part of the peripheral stalk, linking F(1) to F(0). This is ATP synthase subunit b from Parabacteroides distasonis (strain ATCC 8503 / DSM 20701 / CIP 104284 / JCM 5825 / NCTC 11152).